The following is an 858-amino-acid chain: Piwi-like protein 1 (858 aa).

The span at Met-1–Gly-13 shows a compositional bias: basic residues. Residues Met-1–Ala-56 form a disordered region. Residues Gln-16–Pro-26 are compositionally biased toward low complexity. The PAZ domain occupies Thr-276–Gly-388. Positions Thr-314–Arg-316 are required for binding 2'-O-methylated 3'-end of piRNAs. The interval Ser-476 to Glu-612 is MID region. Residues Met-552–His-844 enclose the Piwi domain. Residues Asp-629, Glu-667, Asp-699, and His-833 contribute to the active site.

This sequence belongs to the argonaute family. Piwi subfamily. The cofactor is Mg(2+). In terms of processing, methylated on arginine residues; required for the interaction with Tudor domain-containing protein and subsequent localization to the meiotic nuage, also named P granule. Expressed exclusively in the adult gonads; expression in the ovary weaker than in the testis (at protein level). During neurogenesis and organogenesis, expression is detected in CNS (midbrain and eye) and fin buds. Starting from 24 hours post-fertilization, expression is found in the genital ridge.

The protein localises to the cytoplasm. In terms of biological role, plays a central role during gametogenesis by repressing transposable elements and preventing their mobilization, which is essential for the germline integrity. Acts via the piRNA metabolic process, which mediates the repression of transposable elements during meiosis by forming complexes composed of piRNAs and Piwi proteins and governs the methylation and subsequent repression of transposons. Directly binds methylated piRNAs, a class of 24 to 30 nucleotide RNAs that are generated by a Dicer-independent mechanism and are primarily derived from transposons and other repeated sequence elements. Has a strong preference for piRNAs with a uridine nucleotide at their 5'-end (g1U preference, also named 1U-bias) and binds piRNAs in an opposite direction compared to piwil2/zili. Participates in a piRNA amplification loop with piwil2/zili. Not involved in the piRNA amplification loop, also named ping-pong amplification cycle. Acts as an endoribonuclease that cleaves transposon messenger RNAs. The chain is Piwi-like protein 1 (piwil1) from Danio rerio (Zebrafish).